Consider the following 332-residue polypeptide: 2,3-diketo-L-gulonate reductase (332 aa).

The active-site Proton donor is the H44. NAD(+) is bound by residues 168–174 (ITMVDMS), 224–225 (WK), and 304–306 (GHE).

Belongs to the LDH2/MDH2 oxidoreductase family. DlgD subfamily. Homodimer.

Its subcellular location is the cytoplasm. It catalyses the reaction 3-dehydro-L-gulonate + NAD(+) = 2,3-dioxo-L-gulonate + NADH + H(+). The catalysed reaction is 3-dehydro-L-gulonate + NADP(+) = 2,3-dioxo-L-gulonate + NADPH + H(+). In terms of biological role, catalyzes the reduction of 2,3-diketo-L-gulonate in the presence of NADH, to form 3-keto-L-gulonate. This chain is 2,3-diketo-L-gulonate reductase, found in Klebsiella oxytoca.